Consider the following 839-residue polypeptide: Sodium/hydrogen exchanger 3 (839 aa).

Positions 1 to 32 (MPLGVRGTRREFRFPVWGLLLLALWMLPRALG) are cleaved as a signal peptide. Over 33-56 (VEEIPGPDSHEKQGFQIVTFKWHH) the chain is Extracellular. The chain crosses the membrane as a helical span at residues 57 to 79 (VQDPYIIALWILVASLAKIVFHL). The Cytoplasmic portion of the chain corresponds to 80 to 87 (SHKVTSVV). Residues 88 to 107 (PESALLIVLGLILGGIVWAA) form a helical membrane-spanning segment. Residues 108-116 (DHIASFTLT) lie on the Extracellular side of the membrane. A helical membrane pass occupies residues 117 to 134 (PTVFFFYLLPPIVLDAGY). Over 135 to 137 (FMP) the chain is Cytoplasmic. The helical transmembrane segment at 138–173 (NRLFFGNLGTILLYAVIGTVWNAATTGLSLYGVYLS) threads the bilayer. A 1,2-diacyl-sn-glycero-3-phospho-(1D-myo-inositol) is bound by residues G143, G146, and T147. Topologically, residues 174–186 (GIMGDLSIGLLDF) are extracellular. A helical membrane pass occupies residues 187 to 208 (LLFGSLIAAVDPVAVLAVFEEV). Over 209–210 (HV) the chain is Cytoplasmic. Residues 211–242 (NDVLFIIVFGESLLNDAVTVVLYNVFDSFVSL) form a helical membrane-spanning segment. At 243 to 249 (GADKVTG) the chain is on the extracellular side. A helical transmembrane segment spans residues 250 to 284 (VDCVKGIVSFFVVSLGGTLIGIIFAFLLSLVTRFT). The Cytoplasmic portion of the chain corresponds to 285–286 (KH). A helical membrane pass occupies residues 287 to 309 (VRIIEPGFVFIISYLSYLTSEML). Residues 310-311 (SL) lie on the Extracellular side of the membrane. A helical transmembrane segment spans residues 312-328 (SAILAITFCGICCQKYV). Topologically, residues 329 to 335 (KANISEQ) are cytoplasmic. Residues 336-364 (SATTVRYTMKMLASGAETIIFMFLGISAV) form a helical membrane-spanning segment. The Extracellular portion of the chain corresponds to 365–372 (DPAIWTWN). Residues 373-394 (TAFILLTLVFISVYRAIGVVLQ) traverse the membrane as a helical segment. The Cytoplasmic segment spans residues 395–407 (TWLLNKYRMVQLE). M403 contacts a 1,2-diacyl-sn-glycero-3-phospho-(1D-myo-inositol). Residues 408 to 431 (IIDQVVMSYGGLRGAVAYALVVLL) form a helical membrane-spanning segment. Over 432–438 (DEKKVKE) the chain is Extracellular. Residues 439 to 472 (KNLFVSTTIIVVFFTVIFQGLTIKPLVQWLKVKK) form a helical membrane-spanning segment. Topologically, residues 473 to 839 (SEHREPKLNE…RSFLPESTHM (367 aa)) are cytoplasmic. Residues Q502, I503, and H505 each coordinate a 1,2-diacyl-sn-glycero-3-phospho-(1D-myo-inositol). 2 positions are modified to phosphoserine: S560 and S568. The interval 581 to 595 (RPSTVEASVSYLLRE) is interaction with EZR. The interaction with NHERF4 stretch occupies residues 596 to 673 (NVSTVCLDMQ…RKRLESFKST (78 aa)). The segment at 597 to 701 (VSTVCLDMQA…GQKRRNSSIP (105 aa)) is interaction with AHCYL1. 2 positions are modified to phosphoserine: S598 and S613. S669 carries the post-translational modification Phosphoserine; by SGK1. Over residues 688 to 697 (KRERGQKRRN) the composition is skewed to basic residues. Residues 688-710 (KRERGQKRRNSSIPNGKIPMESP) are disordered. S724, S815, and S818 each carry phosphoserine.

The protein belongs to the monovalent cation:proton antiporter 1 (CPA1) transporter (TC 2.A.36) family. In terms of assembly, homodimer. Found in the forms of complex and dynamic macromolecular complexes. Binds NHERF1 and NHERF2. Interacts with CHP1, CHP2 and SHANK2. Interacts with NHERF4 and interactions decrease in response to elevated calcium ion levels. Interacts with PDZK1 (via C-terminal PDZ domain). Interacts with AHCYL1; the interaction is required for SLC9A3 activity. Interacts with EZR; interaction targets SLC9A3 to the apical membrane. Interacts with SNX27 (via PDZ domains); directs SLC9A3 membrane insertion from early endosomes to the plasma membrane. Phosphorylated by PKA, which inhibits activity. Phosphorylation at Ser-669 by SGK1 is associated with increased abundance at the cell membrane.

Its subcellular location is the apical cell membrane. It is found in the cell membrane. The protein resides in the recycling endosome membrane. It localises to the early endosome membrane. It catalyses the reaction Na(+)(in) + H(+)(out) = Na(+)(out) + H(+)(in). With respect to regulation, seems to switch between active and inactive modes in response to various stimuli. Activated directly or indirectly by membrane phosphatidylinositol (PIs). Regulated by a variety of auxiliary proteins, which facilitate the maturation, cell surface expression and function of the transporter. Inhibited specifically by the drug tenapanor. Its function is as follows. Plasma membrane Na(+)/H(+) antiporter. Exchanges intracellular H(+) ions for extracellular Na(+) in 1:1 stoichiometry, playing a key role in salt and fluid absorption and pH homeostasis. Major apical Na(+)/H(+) exchanger in kidney and intestine playing an important role in renal and intestine Na(+) absorption and blood pressure regulation. The sequence is that of Sodium/hydrogen exchanger 3 (SLC9A3) from Didelphis virginiana (North American opossum).